The sequence spans 302 residues: Ventral anterior homeobox 2a (302 aa).

Disordered regions lie at residues 1-35, 50-73, 156-175, 199-223, and 282-302; these read MFDQ…RDKG, KDIP…SQST, RRTK…SSST, PPNL…LGTS, and AFEP…KSTS. The segment at residues 105–164 is a DNA-binding region (homeobox); it reads PKRTRTSFTAEQLYRLELEFQRCQYVVGRERTELARQLNLSETQVKVWFQNRRTKQKKDQ. Positions 161 to 172 are enriched in basic and acidic residues; sequence KKDQSRDSEKRS. The segment covering 204-223 has biased composition (low complexity); the sequence is SSSQNNMGTSSGNGTNLGTS. A compositionally biased stretch (basic and acidic residues) spans 287 to 296; the sequence is TRLDRKDTAS.

This sequence belongs to the EMX homeobox family.

Its subcellular location is the nucleus. In terms of biological role, transcription factor that may function in dorsoventral specification of the forebrain. Regulates the expression of Wnt signaling antagonists including the expression of a truncated tcf7l2 isoform that cannot bind ctnnb1 and acts therefore as a potent dominant-negative Wnt antagonist. Plays a crucial role in eye development and, in particular, in the specification of the ventral optic vesicle. May be a regulator of axial polarization in the retina. This Xenopus laevis (African clawed frog) protein is Ventral anterior homeobox 2a (vax2-a).